A 136-amino-acid chain; its full sequence is Nuclear receptor 2C2-associated protein (136 aa).

Belongs to the NR2C2AP family.

The protein resides in the nucleus. Functionally, may act as a repressor of nr2c2-mediated transactivation by suppressing the binding between nr2c2 and its response element in target genes. The sequence is that of Nuclear receptor 2C2-associated protein (nr2c2ap) from Xenopus laevis (African clawed frog).